The primary structure comprises 425 residues: Protein UL117 (425 aa).

A disordered region spans residues 59-83 (PTTTSSSLAPPRDDERRPTPPLRPP).

Belongs to the herpesviridae U84 family.

Its subcellular location is the host nucleus. Its function is as follows. Plays a role in the inhibition of host DNA replication in the infected cell. Targets the mini-chromosome maintenance (MCM) complex and blocks the accumulation of MCM proteins and their loading onto host chromatin. The polypeptide is Protein UL117 (UL117) (Homo sapiens (Human)).